Here is a 209-residue protein sequence, read N- to C-terminus: dITP/XTP pyrophosphatase (209 aa).

A substrate-binding site is contributed by 7–12 (SSHGYK). Asp70 serves as the catalytic Proton acceptor. Asp70 provides a ligand contact to Mg(2+). Substrate contacts are provided by residues Ser71, 154 to 157 (FGYD), Lys177, and 182 to 183 (HR).

Belongs to the HAM1 NTPase family. Homodimer. Mg(2+) serves as cofactor.

The catalysed reaction is XTP + H2O = XMP + diphosphate + H(+). It carries out the reaction dITP + H2O = dIMP + diphosphate + H(+). The enzyme catalyses ITP + H2O = IMP + diphosphate + H(+). Its function is as follows. Pyrophosphatase that catalyzes the hydrolysis of nucleoside triphosphates to their monophosphate derivatives, with a high preference for the non-canonical purine nucleotides XTP (xanthosine triphosphate), dITP (deoxyinosine triphosphate) and ITP. Seems to function as a house-cleaning enzyme that removes non-canonical purine nucleotides from the nucleotide pool, thus preventing their incorporation into DNA/RNA and avoiding chromosomal lesions. The protein is dITP/XTP pyrophosphatase of Chlamydia trachomatis serovar L2 (strain ATCC VR-902B / DSM 19102 / 434/Bu).